The chain runs to 643 residues: E3 ubiquitin-protein ligase AMFR (643 aa).

The segment at 39–67 (PEAGPGEPDQLTASLQPEPPAPARPSAGG) is disordered. 6 consecutive transmembrane segments (helical) span residues 82–102 (LFVW…AKLI), 122–142 (FWNF…VQTV), 145–165 (VVMW…VQLC), 186–206 (VLSL…VCSI), 215–235 (TLAF…HVIL), and 276–296 (HIHM…VIFM). Residues 341–379 (CAICWDSMQAARKLPCGHLFHNSCLRSWLEQDTSCPTCR) form an RING-type zinc finger. Residues 429–449 (IASWLPSFSVEVMHTTNILGI) form a helical membrane-spanning segment. Positions 456–498 (QLNAMAHQIQEMFPQVPYHLVLQDLQLTRSVEITTDNILEGRI) constitute a CUE domain. Disordered regions lie at residues 504–579 (TQRS…DERQ) and 596–624 (RFLN…PVTL). A phosphoserine mark is found at Ser516, Ser523, and Ser542. The span at 548 to 563 (TLDFGEVEVEPSEVED) shows a compositional bias: acidic residues. Residues 564–579 (FEARGSRFSKSADERQ) are compositionally biased toward basic and acidic residues. A VCP/p97-interacting motif (VIM) region spans residues 622–640 (VTLRRRMLAAAAERRLQKQ).

As to quaternary structure, interacts with RNF5. Also forms an ERAD complex containing VCP/p97, NGLY1; PSMC1; SAKS1 and RAD23B required for coupling retrotranslocation, ubiquitination and deglycosylation. Interacts with DERL1. Interacts (through a region distinct from the RING finger) with UBE2G2/UBC7. Component of the VCP/p97-AMFR/gp78 complex that enhances VCP/p97 binding to polyubiquitinated proteins for their degradation by the endoplasmic reticulum-associated degradation (ERAD) pathway. Interacts (via the VIM) with VCP/p97. Interacts (via its membrane domain) with INSIG1; the interaction initiates the sterol-mediated ubiquitination and degradation of HMGCR by the ERAD pathway. Interacts with AUP1, UBE2G2 and RNF139/TRC8; interaction with AUP1 facilitates interaction of AMFR with ubiquitin-conjugating enzyme UBE2G2 and ubiquitin ligase RNF139, leading to sterol-induced ubiquitination of HMGCR and its subsequent proteasomal degradation. Interacts with BAG6. Interacts with USP13 (via UBA 2 domain); the interaction is direct. Interacts with LMBR1L. Interacts with UBAC2 and CTNNB1. Interacts with C18orf32. (Microbial infection) Interacts with Staphylococcus aureus HIgB; this interaction regulates AMFR-mediated inflammation by promoting TAB3 ubiquitination to promote TAB3-TAK1 complex formation. In terms of processing, palmitoylation of the RING-type zing finger by ZDHHC6 promotes localization to the peripheral endoplasmic reticulum. As to expression, widely expressed.

Its subcellular location is the endoplasmic reticulum membrane. It catalyses the reaction [E2 ubiquitin-conjugating enzyme]-S-ubiquitinyl-L-cysteine + [acceptor protein]-L-cysteine = [E2 ubiquitin-conjugating enzyme]-L-cysteine + [acceptor protein]-S-ubiquitinyl-L-cysteine.. It participates in protein modification; protein ubiquitination. In terms of biological role, E3 ubiquitin-protein ligase that mediates the polyubiquitination of lysine and cysteine residues on target proteins, such as CD3D, CYP3A4, CFTR, INSIG1, SOAT2/ACAT2 and APOB for proteasomal degradation. Component of a VCP/p97-AMFR/gp78 complex that participates in the final step of endoplasmic reticulum-associated degradation (ERAD). The VCP/p97-AMFR/gp78 complex is involved in the sterol-accelerated ERAD degradation of HMGCR through binding to the HMGCR-INSIG1 complex at the ER membrane. In addition, interaction of AMFR with AUP1 facilitates interaction of AMFR with ubiquitin-conjugating enzyme UBE2G2 and ubiquitin ligase RNF139, leading to sterol-induced HMGCR ubiquitination. The ubiquitinated HMGCR is then released from the ER into the cytosol for subsequent destruction. In addition to ubiquitination on lysine residues, catalyzes ubiquitination on cysteine residues: together with INSIG1, mediates polyubiquitination of SOAT2/ACAT2 at 'Cys-277', leading to its degradation when the lipid levels are low. Catalyzes ubiquitination and subsequent degradation of INSIG1 when cells are depleted of sterols. Mediates polyubiquitination of INSIG2 at 'Cys-215' in some tissues, leading to its degradation. Also regulates ERAD through the ubiquitination of UBL4A a component of the BAG6/BAT3 complex. Also acts as a scaffold protein to assemble a complex that couples ubiquitination, retranslocation and deglycosylation. Mediates tumor invasion and metastasis as a receptor for the GPI/autocrine motility factor. In association with LMBR1L and UBAC2, negatively regulates the canonical Wnt signaling pathway in the lymphocytes by promoting the ubiquitin-mediated degradation of CTNNB1 and Wnt receptors FZD6 and LRP6. Regulates NF-kappa-B and MAPK signaling pathways by mediating 'Lys-27'-linked polyubiquitination of TAB3 and promoting subsequent TAK1/MAP3K7 activation. Required for proper lipid homeostasis. In Homo sapiens (Human), this protein is E3 ubiquitin-protein ligase AMFR.